A 151-amino-acid polypeptide reads, in one-letter code: MKKIDVKILDPRVGKEFPLPTYATSGSAGLDLRACLDDAVELAPGDTTLVPTGLAIHIADPSLAAMMLPRSGLGHKHGIVLGNLVGLIDSDYQGQLMISVWNRGQDSFTIQPGERIAQMIFVPVVQAEFNLVEDFDATDRGEGGFGHSGRQ.

Residues 70–72, Asn-83, 87–89, and Met-97 each bind substrate; these read RSG and LID.

Belongs to the dUTPase family. In terms of assembly, homotrimer. The cofactor is Mg(2+).

It catalyses the reaction dUTP + H2O = dUMP + diphosphate + H(+). It functions in the pathway pyrimidine metabolism; dUMP biosynthesis; dUMP from dCTP (dUTP route): step 2/2. This enzyme is involved in nucleotide metabolism: it produces dUMP, the immediate precursor of thymidine nucleotides and it decreases the intracellular concentration of dUTP so that uracil cannot be incorporated into DNA. The sequence is that of Deoxyuridine 5'-triphosphate nucleotidohydrolase from Escherichia fergusonii (strain ATCC 35469 / DSM 13698 / CCUG 18766 / IAM 14443 / JCM 21226 / LMG 7866 / NBRC 102419 / NCTC 12128 / CDC 0568-73).